We begin with the raw amino-acid sequence, 197 residues long: ATP-dependent Clp protease proteolytic subunit (197 aa).

Residue Ser-98 is the Nucleophile of the active site. The active site involves His-123.

This sequence belongs to the peptidase S14 family. In terms of assembly, fourteen ClpP subunits assemble into 2 heptameric rings which stack back to back to give a disk-like structure with a central cavity, resembling the structure of eukaryotic proteasomes.

It localises to the cytoplasm. The catalysed reaction is Hydrolysis of proteins to small peptides in the presence of ATP and magnesium. alpha-casein is the usual test substrate. In the absence of ATP, only oligopeptides shorter than five residues are hydrolyzed (such as succinyl-Leu-Tyr-|-NHMec, and Leu-Tyr-Leu-|-Tyr-Trp, in which cleavage of the -Tyr-|-Leu- and -Tyr-|-Trp bonds also occurs).. In terms of biological role, cleaves peptides in various proteins in a process that requires ATP hydrolysis. Has a chymotrypsin-like activity. Plays a major role in the degradation of misfolded proteins. This is ATP-dependent Clp protease proteolytic subunit from Limosilactobacillus reuteri (strain DSM 20016) (Lactobacillus reuteri).